The sequence spans 287 residues: MDKVKIALQYIMPKHLLSRLVGKLAAAEMGSVTTAAINWFIKQYKIDMSEAAEPEATAYSCFNDFFTRALKPGIRPLCDDNDYIVHPVDGAVSQLGPIKEGRIFQAKGHDYSSLALLGDQADDAKRFEGGDFATIYLAPKDYHRIHMPIKGTLSKMTYVPGELFSVNPLTAENVPGLFARNERVVAIFETEIGPMAMVLVGATIVASIETVWAGTVTPPTGKKVFTWDYPTEGPNALTLEKGAEMGRFKLGSTVVMLFAKDALDEFADGVEPRSVTRMGQAFAKIED.

Catalysis depends on charge relay system; for autoendoproteolytic cleavage activity residues D89, H146, and S252. S252 serves as the catalytic Schiff-base intermediate with substrate; via pyruvic acid; for decarboxylase activity. Residue S252 is modified to Pyruvic acid (Ser); by autocatalysis.

This sequence belongs to the phosphatidylserine decarboxylase family. PSD-B subfamily. Prokaryotic type I sub-subfamily. In terms of assembly, heterodimer of a large membrane-associated beta subunit and a small pyruvoyl-containing alpha subunit. Pyruvate is required as a cofactor. In terms of processing, is synthesized initially as an inactive proenzyme. Formation of the active enzyme involves a self-maturation process in which the active site pyruvoyl group is generated from an internal serine residue via an autocatalytic post-translational modification. Two non-identical subunits are generated from the proenzyme in this reaction, and the pyruvate is formed at the N-terminus of the alpha chain, which is derived from the carboxyl end of the proenzyme. The autoendoproteolytic cleavage occurs by a canonical serine protease mechanism, in which the side chain hydroxyl group of the serine supplies its oxygen atom to form the C-terminus of the beta chain, while the remainder of the serine residue undergoes an oxidative deamination to produce ammonia and the pyruvoyl prosthetic group on the alpha chain. During this reaction, the Ser that is part of the protease active site of the proenzyme becomes the pyruvoyl prosthetic group, which constitutes an essential element of the active site of the mature decarboxylase.

The protein localises to the cell membrane. It catalyses the reaction a 1,2-diacyl-sn-glycero-3-phospho-L-serine + H(+) = a 1,2-diacyl-sn-glycero-3-phosphoethanolamine + CO2. The protein operates within phospholipid metabolism; phosphatidylethanolamine biosynthesis; phosphatidylethanolamine from CDP-diacylglycerol: step 2/2. In terms of biological role, catalyzes the formation of phosphatidylethanolamine (PtdEtn) from phosphatidylserine (PtdSer). This chain is Phosphatidylserine decarboxylase proenzyme, found in Shewanella halifaxensis (strain HAW-EB4).